The sequence spans 306 residues: Dermonecrotic toxin LiSicTox-alphaIA2ai (306 aa).

The N-terminal stretch at 1–18 (MLPYIALILVCWSVLSQA) is a signal peptide. Residues 19 to 26 (AQTDVEGR) constitute a propeptide that is removed on maturation. The active site involves H38. Residues E58 and D60 each contribute to the Mg(2+) site. H74 (nucleophile) is an active-site residue. 2 cysteine pairs are disulfide-bonded: C78/C84 and C80/C223. Position 118 (D118) interacts with Mg(2+). An N-linked (GlcNAc...) asparagine glycan is attached at N283.

It belongs to the arthropod phospholipase D family. Class II subfamily. Class IIa sub-subfamily. It depends on Mg(2+) as a cofactor. As to expression, expressed by the venom gland.

The protein localises to the secreted. It carries out the reaction an N-(acyl)-sphingosylphosphocholine = an N-(acyl)-sphingosyl-1,3-cyclic phosphate + choline. The enzyme catalyses an N-(acyl)-sphingosylphosphoethanolamine = an N-(acyl)-sphingosyl-1,3-cyclic phosphate + ethanolamine. It catalyses the reaction a 1-acyl-sn-glycero-3-phosphocholine = a 1-acyl-sn-glycero-2,3-cyclic phosphate + choline. The catalysed reaction is a 1-acyl-sn-glycero-3-phosphoethanolamine = a 1-acyl-sn-glycero-2,3-cyclic phosphate + ethanolamine. Its function is as follows. Dermonecrotic toxins cleave the phosphodiester linkage between the phosphate and headgroup of certain phospholipids (sphingolipid and lysolipid substrates), forming an alcohol (often choline) and a cyclic phosphate. This toxin acts on sphingomyelin (SM). It may also act on ceramide phosphoethanolamine (CPE), lysophosphatidylcholine (LPC) and lysophosphatidylethanolamine (LPE), but not on lysophosphatidylserine (LPS), and lysophosphatidylglycerol (LPG). It acts by transphosphatidylation, releasing exclusively cyclic phosphate products as second products. It induces complement-dependent hemolysis, dermonecrosis, vascular permeability and platelet aggregation. This Loxosceles intermedia (Brown spider) protein is Dermonecrotic toxin LiSicTox-alphaIA2ai.